Consider the following 140-residue polypeptide: Sex-regulated protein janus-B (140 aa).

Residue arginine 42 coordinates substrate. Histidine 69 (proton acceptor) is an active-site residue. 110–112 contacts substrate; sequence SRT.

The protein belongs to the janus family.

JanA and janB regulate somatic sex differentiation. The sequence is that of Sex-regulated protein janus-B (janB) from Drosophila erecta (Fruit fly).